Reading from the N-terminus, the 155-residue chain is MSRKGSTPQRNVLPDPKYGSETIARFINMVMKSGKKSVAEKIVYGAMNVIGEKNSNAIELLQKALDNVSPAVEVKSRRVGGATYQVPVEVRASRRMALAMRWLIDSSRKRGENSMPHKLAAELLDASESRGGAIKKREETHRMAEANKAFAHYRW.

It belongs to the universal ribosomal protein uS7 family. As to quaternary structure, part of the 30S ribosomal subunit. Contacts proteins S9 and S11.

Its function is as follows. One of the primary rRNA binding proteins, it binds directly to 16S rRNA where it nucleates assembly of the head domain of the 30S subunit. Is located at the subunit interface close to the decoding center, probably blocks exit of the E-site tRNA. The sequence is that of Small ribosomal subunit protein uS7 from Xylella fastidiosa (strain 9a5c).